The sequence spans 470 residues: Membrane-bound lytic murein transglycosylase F (470 aa).

Residues 1–21 (MLKEKLIIIITLVMLLCACDI) form the signal peptide. Residues 22–259 (QEQSTQLAQI…VLEEKYFGHV (238 aa)) are non-LT domain. An LT domain region spans residues 260 to 470 (RQFNYVNTLA…PKIGDEVEAK (211 aa)). Glu304 is a catalytic residue.

It in the N-terminal section; belongs to the bacterial solute-binding protein 3 family. This sequence in the C-terminal section; belongs to the transglycosylase Slt family.

It localises to the cell outer membrane. The catalysed reaction is Exolytic cleavage of the (1-&gt;4)-beta-glycosidic linkage between N-acetylmuramic acid (MurNAc) and N-acetylglucosamine (GlcNAc) residues in peptidoglycan, from either the reducing or the non-reducing ends of the peptidoglycan chains, with concomitant formation of a 1,6-anhydrobond in the MurNAc residue.. Functionally, murein-degrading enzyme that degrades murein glycan strands and insoluble, high-molecular weight murein sacculi, with the concomitant formation of a 1,6-anhydromuramoyl product. Lytic transglycosylases (LTs) play an integral role in the metabolism of the peptidoglycan (PG) sacculus. Their lytic action creates space within the PG sacculus to allow for its expansion as well as for the insertion of various structures such as secretion systems and flagella. This chain is Membrane-bound lytic murein transglycosylase F, found in Pseudoalteromonas translucida (strain TAC 125).